Here is a 556-residue protein sequence, read N- to C-terminus: Formate--tetrahydrofolate ligase (556 aa).

Residue 65–72 (TPAGEGKS) coordinates ATP.

Belongs to the formate--tetrahydrofolate ligase family.

The enzyme catalyses (6S)-5,6,7,8-tetrahydrofolate + formate + ATP = (6R)-10-formyltetrahydrofolate + ADP + phosphate. It functions in the pathway one-carbon metabolism; tetrahydrofolate interconversion. This is Formate--tetrahydrofolate ligase from Streptococcus pneumoniae (strain ATCC 700669 / Spain 23F-1).